The sequence spans 181 residues: Protein GrpE (181 aa).

This sequence belongs to the GrpE family. In terms of assembly, homodimer.

It is found in the cytoplasm. Participates actively in the response to hyperosmotic and heat shock by preventing the aggregation of stress-denatured proteins, in association with DnaK and GrpE. It is the nucleotide exchange factor for DnaK and may function as a thermosensor. Unfolded proteins bind initially to DnaJ; upon interaction with the DnaJ-bound protein, DnaK hydrolyzes its bound ATP, resulting in the formation of a stable complex. GrpE releases ADP from DnaK; ATP binding to DnaK triggers the release of the substrate protein, thus completing the reaction cycle. Several rounds of ATP-dependent interactions between DnaJ, DnaK and GrpE are required for fully efficient folding. The sequence is that of Protein GrpE from Leptothrix cholodnii (strain ATCC 51168 / LMG 8142 / SP-6) (Leptothrix discophora (strain SP-6)).